The sequence spans 766 residues: U3 small nucleolar RNA-associated protein 14 homolog C (766 aa).

The tract at residues 14-42 (HQEELVDLPKNYPLSENEDEGDSDGERKH) is disordered. Ser28, Ser51, Ser76, and Ser80 each carry phosphoserine. Lys121 participates in a covalent cross-link: Glycyl lysine isopeptide (Lys-Gly) (interchain with G-Cter in SUMO2). At Thr204 the chain carries Phosphothreonine. Coiled coils occupy residues 216–245 (LEEA…KEKK) and 316–346 (LEAR…EEEE). Residues 365-563 (MNVDGPNPWM…EQLINLQNFL (199 aa)) are disordered. Low complexity predominate over residues 396–405 (ELAAHEVSAS). 2 positions are modified to phosphoserine: Ser403 and Ser405. Basic and acidic residues predominate over residues 407–434 (AEERPVAEEEILLREFEERQSLRKRSEL). Ser443 is subject to Phosphoserine. A Glycyl lysine isopeptide (Lys-Gly) (interchain with G-Cter in SUMO2) cross-link involves residue Lys447. Ser451 bears the Phosphoserine mark. Residues 452–470 (QEVLSELRALSQKLKEKHQ) adopt a coiled-coil conformation. The segment covering 466-475 (KEKHQSRKQK) has biased composition (basic residues). Residues 502-527 (RSERVQTLEELEELGKEDCFQNKELP) show a composition bias toward basic and acidic residues. A Glycyl lysine isopeptide (Lys-Gly) (interchain with G-Cter in SUMO2) cross-link involves residue Lys517. The span at 533–542 (GQQSERTPNN) shows a compositional bias: polar residues. Over residues 545–555 (DAPKEKKEKEQ) the composition is skewed to basic and acidic residues. Ser567 is subject to Phosphoserine. Lys732 is covalently cross-linked (Glycyl lysine isopeptide (Lys-Gly) (interchain with G-Cter in SUMO2)). Positions 734–766 (EDVGYQSSSRSDLPVIQRNPKRITTRHNKEEKL) are disordered.

The protein belongs to the UTP14 family. In terms of tissue distribution, expressed in testis.

It is found in the nucleus. The protein localises to the nucleolus. Functionally, essential for spermatogenesis. May be required specifically for ribosome biogenesis and hence protein synthesis during male meiosis. The polypeptide is U3 small nucleolar RNA-associated protein 14 homolog C (UTP14C) (Homo sapiens (Human)).